The sequence spans 1567 residues: ABC multidrug transporter MDR1 (1567 aa).

The segment covering 1–11 has biased composition (pro residues); the sequence is MASQPPQPPSG. The tract at residues 1–37 is disordered; that stretch reads MASQPPQPPSGQPDTQYEEYQSEVITETTNRPTPAAD. A compositionally biased stretch (polar residues) spans 22-32; it reads SEVITETTNRP. N-linked (GlcNAc...) asparagine glycosylation is found at N149, N157, and N356. The 266-residue stretch at 167 to 432 folds into the ABC transporter 1 domain; it reads VQYQDTFLSP…FEEMGWYCPP (266 aa). The next 6 membrane-spanning stretches (helical) occupy residues 543 to 563, 571 to 591, 636 to 656, 661 to 681, 691 to 711, and 798 to 818; these read STIA…SLFF, GFFA…LMSI, IPIK…LGGL, AKFF…SAIF, IPQA…YTGF, and LGIL…VSEL. Residues N819, N895, and N912 are each glycosylated (N-linked (GlcNAc...) asparagine). The region spanning 891–1134 is the ABC transporter 2 domain; sequence FTWRNVTYDI…LLNYFETHGA (244 aa). 927–934 is an ATP binding site; the sequence is GVSGAGKT. The tract at residues 1172-1202 is disordered; it reads ESRHVQQELDRIQSETSKRNEGHGQSAEKEP. Residues 1231 to 1251 form a helical membrane-spanning segment; the sequence is IWGKLLLGLTSALFIGFSFFL. A glycan (N-linked (GlcNAc...) asparagine) is linked at N1253. 5 helical membrane passes run 1257 to 1277, 1305 to 1325, 1345 to 1365, 1372 to 1392, and 1498 to 1518; these read AGLQ…SSLV, VFLL…GIIA, ILLL…QMII, ETAG…NGVL, and GIGW…YYLI.

Belongs to the ABC transporter superfamily. ABCG family. PDR (TC 3.A.1.205) subfamily.

It localises to the cell membrane. The catalysed reaction is voriconazole(in) + ATP + H2O = voriconazole(out) + ADP + phosphate + H(+). It catalyses the reaction fluconazole(in) + ATP + H2O = fluconazole(out) + ADP + phosphate + H(+). It carries out the reaction (R)-miconazole(in) + ATP + H2O = (R)-miconazole(out) + ADP + phosphate + H(+). The enzyme catalyses (S)-miconazole(in) + ATP + H2O = (S)-miconazole(out) + ADP + phosphate + H(+). Pleiotropic ABC efflux transporter that may be involved in the modulation susceptibility to a wide range of unrelated cytotoxic compounds. The chain is ABC multidrug transporter MDR1 from Trichophyton tonsurans (strain CBS 112818) (Scalp ringworm fungus).